We begin with the raw amino-acid sequence, 381 residues long: Erythronate-4-phosphate dehydrogenase (381 aa).

Residues S45 and T66 each coordinate substrate. Positions 146 and 173 each coordinate NAD(+). R206 is an active-site residue. D230 is a binding site for NAD(+). E235 is an active-site residue. The active-site Proton donor is H252. Residue G255 coordinates NAD(+). Y256 contributes to the substrate binding site.

This sequence belongs to the D-isomer specific 2-hydroxyacid dehydrogenase family. PdxB subfamily. As to quaternary structure, homodimer.

It localises to the cytoplasm. It catalyses the reaction 4-phospho-D-erythronate + NAD(+) = (R)-3-hydroxy-2-oxo-4-phosphooxybutanoate + NADH + H(+). It participates in cofactor biosynthesis; pyridoxine 5'-phosphate biosynthesis; pyridoxine 5'-phosphate from D-erythrose 4-phosphate: step 2/5. In terms of biological role, catalyzes the oxidation of erythronate-4-phosphate to 3-hydroxy-2-oxo-4-phosphonooxybutanoate. In Hahella chejuensis (strain KCTC 2396), this protein is Erythronate-4-phosphate dehydrogenase.